Consider the following 349-residue polypeptide: Phosphoribosylformylglycinamidine cyclo-ligase (349 aa).

This sequence belongs to the AIR synthase family.

The protein localises to the cytoplasm. It catalyses the reaction 2-formamido-N(1)-(5-O-phospho-beta-D-ribosyl)acetamidine + ATP = 5-amino-1-(5-phospho-beta-D-ribosyl)imidazole + ADP + phosphate + H(+). Its pathway is purine metabolism; IMP biosynthesis via de novo pathway; 5-amino-1-(5-phospho-D-ribosyl)imidazole from N(2)-formyl-N(1)-(5-phospho-D-ribosyl)glycinamide: step 2/2. This chain is Phosphoribosylformylglycinamidine cyclo-ligase, found in Listeria monocytogenes serovar 1/2a (strain ATCC BAA-679 / EGD-e).